The primary structure comprises 104 residues: uncharacterized protein (104 aa).

The span at 58–71 (PERDRARRDRDHHP) shows a compositional bias: basic and acidic residues. Positions 58-84 (PERDRARRDRDHHPWSRSRSQLSPRMA) are disordered.

This is an uncharacterized protein from Mycobacterium tuberculosis (strain ATCC 25618 / H37Rv).